Here is a 168-residue protein sequence, read N- to C-terminus: Histone doublet miniH2B-H2A (168 aa).

It is found in the host nucleus. It localises to the host cytoplasm. The protein localises to the virion. Histone-like protein that is recruited to viral factories during viral replication and participates in viral DNA packaging and virion production probably by forming unstable nucleosome-like particles. May compact the viral DNA. The sequence is that of Histone doublet miniH2B-H2A from Melbournevirus (MelV).